The primary structure comprises 664 residues: Putative membrane protein Bcell_0381 (664 aa).

Residues 588-616 are compositionally biased toward acidic residues; it reads DVTQDENGEEKSEEDNKEEIVEENTEEDN. Residues 588–622 form a disordered region; the sequence is DVTQDENGEEKSEEDNKEEIVEENTEEDNKEEKTI. The chain crosses the membrane as a helical span at residues 636–656; the sequence is YQFLLAGIIMLVGGSCIYVFY.

Its subcellular location is the cell membrane. The polypeptide is Putative membrane protein Bcell_0381 (Evansella cellulosilytica (strain ATCC 21833 / DSM 2522 / FERM P-1141 / JCM 9156 / N-4) (Bacillus cellulosilyticus)).